Here is a 156-residue protein sequence, read N- to C-terminus: MNINATLIGQSVAFFIFVLFCMKFVWPPVIAALHERQKKIADGLDAASRAARDLELAQEKAGQQLREAKAQAAEIIEQAKKRGTQIVDEARETARVEADRVKAQAQAEIEQELNGVKDALRAQLGSLAVNGAEKILGATIDQNAHAELVNKLAAEI.

The helical transmembrane segment at 12-32 threads the bilayer; that stretch reads VAFFIFVLFCMKFVWPPVIAA.

It belongs to the ATPase B chain family. As to quaternary structure, F-type ATPases have 2 components, F(1) - the catalytic core - and F(0) - the membrane proton channel. F(1) has five subunits: alpha(3), beta(3), gamma(1), delta(1), epsilon(1). F(0) has three main subunits: a(1), b(2) and c(10-14). The alpha and beta chains form an alternating ring which encloses part of the gamma chain. F(1) is attached to F(0) by a central stalk formed by the gamma and epsilon chains, while a peripheral stalk is formed by the delta and b chains.

It localises to the cell inner membrane. F(1)F(0) ATP synthase produces ATP from ADP in the presence of a proton or sodium gradient. F-type ATPases consist of two structural domains, F(1) containing the extramembraneous catalytic core and F(0) containing the membrane proton channel, linked together by a central stalk and a peripheral stalk. During catalysis, ATP synthesis in the catalytic domain of F(1) is coupled via a rotary mechanism of the central stalk subunits to proton translocation. Its function is as follows. Component of the F(0) channel, it forms part of the peripheral stalk, linking F(1) to F(0). In Pseudomonas syringae pv. syringae (strain B728a), this protein is ATP synthase subunit b.